Here is a 292-residue protein sequence, read N- to C-terminus: Mycothiol acetyltransferase (292 aa).

2 consecutive N-acetyltransferase domains span residues 2–138 and 141–292; these read AEVV…PSAP and VTVR…YAHS. E33 lines the 1D-myo-inositol 2-(L-cysteinylamino)-2-deoxy-alpha-D-glucopyranoside pocket. Residue 68 to 70 participates in acetyl-CoA binding; that stretch reads AVV. 1D-myo-inositol 2-(L-cysteinylamino)-2-deoxy-alpha-D-glucopyranoside contacts are provided by E168, K215, and E225. Residues 229–231 and 236–242 contribute to the acetyl-CoA site; these read VAV and QGRGLGR. A 1D-myo-inositol 2-(L-cysteinylamino)-2-deoxy-alpha-D-glucopyranoside-binding site is contributed by Y263. Position 268–273 (268–273) interacts with acetyl-CoA; sequence NAAALH.

Belongs to the acetyltransferase family. MshD subfamily. In terms of assembly, monomer.

The catalysed reaction is 1D-myo-inositol 2-(L-cysteinylamino)-2-deoxy-alpha-D-glucopyranoside + acetyl-CoA = mycothiol + CoA + H(+). Catalyzes the transfer of acetyl from acetyl-CoA to desacetylmycothiol (Cys-GlcN-Ins) to form mycothiol. This is Mycothiol acetyltransferase from Tsukamurella paurometabola (strain ATCC 8368 / DSM 20162 / CCUG 35730 / CIP 100753 / JCM 10117 / KCTC 9821 / NBRC 16120 / NCIMB 702349 / NCTC 13040) (Corynebacterium paurometabolum).